The following is a 275-amino-acid chain: MSVWTSRKAAEDNDTSLSSGIRAGLQKAVVTLHPEWVRVLQDDSVTLRCQGTYPPGDNSTKWFHNGSLTLQQDANYLIGSAKVKDSGEYTCQTALSMLSDPVNLEVHIGWLLLQTTQRPVFREGDPIRLNCHSWRNTPVYKVTYLQNGKGKKYFHKNSELHIPNATQNHSGSYFCRGIIGRNNKSSETLRITVGDLTSPSTFPPWHQITFCLLIGLLFTIDTVMYFSVQKGLRRSTADYEEPEVHWSKEPENKTISEEKQSFRSSRANSETPENR.

The first 23 residues, 1-23 (MSVWTSRKAAEDNDTSLSSGIRA), serve as a signal peptide directing secretion. The Extracellular portion of the chain corresponds to 24 to 207 (GLQKAVVTLH…SPSTFPPWHQ (184 aa)). Ig-like C2-type domains follow at residues 28–92 (AVVT…YTCQ) and 101–192 (PVNL…LRIT). Intrachain disulfides connect C49/C91 and C131/C175. 3 N-linked (GlcNAc...) asparagine glycosylation sites follow: N65, N168, and N183. The helical transmembrane segment at 208–228 (ITFCLLIGLLFTIDTVMYFSV) threads the bilayer. Residues 229–275 (QKGLRRSTADYEEPEVHWSKEPENKTISEEKQSFRSSRANSETPENR) lie on the Cytoplasmic side of the membrane. The segment at 237–275 (ADYEEPEVHWSKEPENKTISEEKQSFRSSRANSETPENR) is disordered. Phosphotyrosine is present on Y239. The segment covering 242–261 (PEVHWSKEPENKTISEEKQS) has biased composition (basic and acidic residues). The segment covering 262 to 275 (FRSSRANSETPENR) has biased composition (polar residues).

Forms a heterooligomeric complex with ITAM-containing signaling subunits FCER1G. Interacts (via transmembrane domain) with signaling subunits; this interaction is a prerequisite for receptor complex expression on the cell surface and intracellular signal transduction. Binds the Fc region of antigen-complexed IgG. N-glycosylated. In terms of processing, phosphorylated following receptor ligation.

The protein localises to the cell membrane. Its function is as follows. Receptor for the invariable Fc fragment of immunoglobulin gamma (IgG). Binds with intermediate affinity to both IgG2a and IgG2b. Can bind to IgG2a and IgG2b monomers. Does not display binding to IgG1 or IgG3. Recognizes neutralizing virus-specific IgGs displayed on the cell surface of infected cells and triggers antibody-dependent cellular cytotoxicity (ADCC). Confers protection to lethal influenza virus infection. On splenic dendritic cells, uptakes antigen immune complexes and efficiently divert them into MHC class I and II antigen presentation pathways to provide for superior priming of CD4-positive and CD8-positive T cell immune responses. Mediates neutrophil activation by IgG complexes redundantly with FCGR2A. Plays a role in promoting bone resorption by enhancing osteoclast differentiation following binding to IgG2a. Also acts as a receptor for the Fc region of immunoglobulin epsilon (IgE). Binds with low affinity to both the a and b allotypes of IgE. Has also been shown to bind to IgE allotype a only but not to allotype b. Binds aggregated IgE but not the monomeric form and bound monomeric IgG is readily displaced by IgE complexes. Binding to IgE promotes macrophage-mediated phagocytosis, antigen presentation to T cells, production of pro-inflammatory cytokines and the late phase of cutaneous allergic reactions. Mediates enhanced ADCC in response to afucosylated IgGs. The polypeptide is Low affinity immunoglobulin gamma Fc region receptor III-A (Cricetulus griseus (Chinese hamster)).